A 95-amino-acid polypeptide reads, in one-letter code: Small ribosomal subunit protein bS21 (95 aa).

Residues 56–95 are disordered; sequence KLARKKMQREGLLPMKPKPVFGAGPGAGRGGPAAGPRGPR. Residues 78–88 are compositionally biased toward gly residues; that stretch reads AGPGAGRGGPA.

It belongs to the bacterial ribosomal protein bS21 family.

The sequence is that of Small ribosomal subunit protein bS21 from Nitrobacter winogradskyi (strain ATCC 25391 / DSM 10237 / CIP 104748 / NCIMB 11846 / Nb-255).